The chain runs to 204 residues: LexA repressor (204 aa).

A DNA-binding region (H-T-H motif) is located at residues 30–50 (IREICQGVGLSSPSTVHHHLK). Active-site for autocatalytic cleavage activity residues include S125 and K162.

Belongs to the peptidase S24 family. Homodimer.

The catalysed reaction is Hydrolysis of Ala-|-Gly bond in repressor LexA.. In terms of biological role, represses a number of genes involved in the response to DNA damage (SOS response), including recA and lexA. In the presence of single-stranded DNA, RecA interacts with LexA causing an autocatalytic cleavage which disrupts the DNA-binding part of LexA, leading to derepression of the SOS regulon and eventually DNA repair. The polypeptide is LexA repressor (Carboxydothermus hydrogenoformans (strain ATCC BAA-161 / DSM 6008 / Z-2901)).